A 443-amino-acid polypeptide reads, in one-letter code: Type I restriction enzyme HindI methylase subunit (443 aa).

Residues 117–122 (QYFTPK), 146–148 (SGG), and E173 each bind S-adenosyl-L-methionine.

This sequence belongs to the N(4)/N(6)-methyltransferase family. As to quaternary structure, the type I restriction/modification system is composed of three polypeptides R, M and S; the restriction enzyme has stoichiometry R(2)M(2)S(1) while the methyltransferase is M(2)S(1).

The enzyme catalyses a 2'-deoxyadenosine in DNA + S-adenosyl-L-methionine = an N(6)-methyl-2'-deoxyadenosine in DNA + S-adenosyl-L-homocysteine + H(+). Functionally, the subtype gamma methyltransferase (M) subunit of a type I restriction enzyme. The M and S subunits together form a methyltransferase (MTase) that methylates adenosines in the sequence 5'-RAACN(5)TAG-3'. Methylation protects against cleavage by HindI. In the presence of the R subunit the complex can also act as an endonuclease, binding to the same target sequence but cutting the DNA some distance from this site. Whether the DNA is cut or modified depends on the methylation state of the target sequence. When the target site is unmodified, the DNA is cut. When the target site is hemimethylated, the complex acts as a maintenance MTase modifying the DNA so that both strands become methylated. After locating a non-methylated recognition site, the enzyme complex serves as a molecular motor that translocates DNA in an ATP-dependent manner until a collision occurs that triggers cleavage. In Haemophilus influenzae (strain ATCC 51907 / DSM 11121 / KW20 / Rd), this protein is Type I restriction enzyme HindI methylase subunit.